A 266-amino-acid chain; its full sequence is Basic endochitinase C (266 aa).

Positions 1-23 (MRSLAVVVAVVATVAMAIGTAHG) are cleaved as a signal peptide. 3 disulfide bridges follow: Cys-46–Cys-108, Cys-120–Cys-128, and Cys-246–Cys-259. Glu-90 functions as the Proton donor in the catalytic mechanism.

It belongs to the glycosyl hydrolase 19 family. Chitinase class II subfamily. Localized to the starchy endoderm of the seed May localize to other parts of the seed including the aleurone cells (at protein level).

It carries out the reaction Random endo-hydrolysis of N-acetyl-beta-D-glucosaminide (1-&gt;4)-beta-linkages in chitin and chitodextrins.. Defense against chitin-containing fungal pathogens. Binds the hyphal tips of fungi and degrades nascent chitin. The polypeptide is Basic endochitinase C (Secale cereale (Rye)).